Reading from the N-terminus, the 560-residue chain is Protein tweety homolog 3 (560 aa).

The Extracellular segment spans residues 1-43; the sequence is MAAVVNYSPPWWVNLFHRLPHFNLQFQQTSSDFRPDDSDYQKA. A helical membrane pass occupies residues 44–64; sequence VLLLGAAALVCLALDLLFLLF. At 65-87 the chain is on the cytoplasmic side; it reads YSFWLCCCRRKNHDSPNADCCCT. A helical transmembrane segment spans residues 88–108; the sequence is AWCVIIATLVCSAGIAVGFYG. At 109–212 the chain is on the extracellular side; the sequence is NGETCDGVTR…TEQYDWYRWL (104 aa). E111 and D114 together coordinate Ca(2+). Residues N127 and N145 are each glycosylated (N-linked (GlcNAc...) asparagine). A helical transmembrane segment spans residues 213 to 233; it reads GYLGLLLFDVIICLLVLVGLI. The Cytoplasmic portion of the chain corresponds to 234–238; that stretch reads RNSRS. A helical membrane pass occupies residues 239 to 259; it reads ILIGVCFLGVLTLVISWASLG. Residues 260–387 lie on the Extracellular side of the membrane; the sequence is LEFSFAVGAS…LTGLCYDGVE (128 aa). Disulfide bonds link C272-C382 and C300-C367. N352 is a glycosylation site (N-linked (GlcNAc...) asparagine). Residues 388–408 traverse the membrane as a helical segment; that stretch reads GLIYLVLFSFVTALMFSSIVC. The Cytoplasmic portion of the chain corresponds to 409–560; it reads SVPHTWQSKR…AIHRPHSAIH (152 aa). Disordered regions lie at residues 415-435 and 486-560; these read QSKRSEEEDGDETSATLGSRA and TPRC…SAIH. A compositionally biased stretch (polar residues) spans 539-549; that stretch reads TSRSAPNSRPN.

It belongs to the tweety family. As to quaternary structure, homotetramer; disulfide-linked. Forms cis-homodimers in the presence of Ca(2+).

It localises to the cell membrane. The catalysed reaction is chloride(in) = chloride(out). It carries out the reaction L-glutamate(out) = L-glutamate(in). Its function is as follows. May act as a calcium-independent, swelling-dependent volume-regulated anion channel (VRAC-swell) which plays a pivotal role in the process of regulatory volume decrease (RVD) in the brain through the efflux of anions like chloride and organic osmolytes like glutamate. Probable large-conductance Ca(2+)-activated chloride channel. The protein is Protein tweety homolog 3 (ttyh3b) of Danio rerio (Zebrafish).